We begin with the raw amino-acid sequence, 328 residues long: MIRNPNYTDFVCCAVCNKIIPPAPFGETFKRIYDYKPFKTRFYTHKDILDIGASILNKEEEFRETVFKEQIKKAEAKVWEKAELLQKQAVDQAVEDAEARHKFEIRVLEEQHQKDLKALEDKTKVNMIQQMKEELNREHTAAEQRMVHRIQRIMMECHQEKMEAVKKAREEERRIAQKAIEEEKSKVLEEFVTTGVTVIKDKKTSLGQLIKAKEHEMTIYYGMAQRQKQEEVQEVLQEAEKTHQATLDNMMGKLVNTQGELLSVAKQLGIMTNWKDFLEEELQETRAAFQKYINYTFPRLSPGHADFILPERKKTPSILAKENEPRTD.

Coiled-coil stretches lie at residues Phe-67–Glu-190 and Met-223–Met-251.

This is an uncharacterized protein from Mus musculus (Mouse).